The sequence spans 275 residues: 2-dehydro-3-deoxyphosphooctonate aldolase (275 aa).

Belongs to the KdsA family.

The protein localises to the cytoplasm. It carries out the reaction D-arabinose 5-phosphate + phosphoenolpyruvate + H2O = 3-deoxy-alpha-D-manno-2-octulosonate-8-phosphate + phosphate. Its pathway is carbohydrate biosynthesis; 3-deoxy-D-manno-octulosonate biosynthesis; 3-deoxy-D-manno-octulosonate from D-ribulose 5-phosphate: step 2/3. The protein operates within bacterial outer membrane biogenesis; lipopolysaccharide biosynthesis. This chain is 2-dehydro-3-deoxyphosphooctonate aldolase, found in Francisella tularensis subsp. mediasiatica (strain FSC147).